The sequence spans 420 residues: 2,3-dimethylmalate dehydratase large subunit (420 aa).

Residues C301, C361, and C364 each contribute to the [4Fe-4S] cluster site.

It belongs to the aconitase/IPM isomerase family. LeuC type 2 subfamily. In terms of assembly, heterodimer of a large and a small subunit. The cofactor is [4Fe-4S] cluster.

It catalyses the reaction (2R,3S)-2,3-dimethylmalate = dimethylmaleate + H2O. The protein operates within cofactor degradation; nicotinate degradation; propanoate and pyruvate from 6-hydroxynicotinate: step 7/8. This is 2,3-dimethylmalate dehydratase large subunit (dmdA) from Eubacterium barkeri (Clostridium barkeri).